Here is a 310-residue protein sequence, read N- to C-terminus: N-acetyl-gamma-glutamyl-phosphate reductase (310 aa).

The active site involves Cys-117.

The protein belongs to the NAGSA dehydrogenase family. Type 2 subfamily.

The protein resides in the cytoplasm. The enzyme catalyses N-acetyl-L-glutamate 5-semialdehyde + phosphate + NADP(+) = N-acetyl-L-glutamyl 5-phosphate + NADPH + H(+). Its pathway is amino-acid biosynthesis; L-arginine biosynthesis; N(2)-acetyl-L-ornithine from L-glutamate: step 3/4. Its function is as follows. Catalyzes the NADPH-dependent reduction of N-acetyl-5-glutamyl phosphate to yield N-acetyl-L-glutamate 5-semialdehyde. This chain is N-acetyl-gamma-glutamyl-phosphate reductase, found in Sinorhizobium medicae (strain WSM419) (Ensifer medicae).